Consider the following 351-residue polypeptide: 4-hydroxy-3-methylbut-2-enyl diphosphate reductase (351 aa).

A [4Fe-4S] cluster-binding site is contributed by Cys18. (2E)-4-hydroxy-3-methylbut-2-enyl diphosphate contacts are provided by His47 and His83. Dimethylallyl diphosphate-binding residues include His47 and His83. Positions 47 and 83 each coordinate isopentenyl diphosphate. A [4Fe-4S] cluster-binding site is contributed by Cys105. Residue His133 coordinates (2E)-4-hydroxy-3-methylbut-2-enyl diphosphate. Position 133 (His133) interacts with dimethylallyl diphosphate. Isopentenyl diphosphate is bound at residue His133. The active-site Proton donor is Glu135. Residue Thr174 participates in (2E)-4-hydroxy-3-methylbut-2-enyl diphosphate binding. Cys204 serves as a coordination point for [4Fe-4S] cluster. (2E)-4-hydroxy-3-methylbut-2-enyl diphosphate is bound by residues Ser232, Ser233, Asn234, and Ser277. Dimethylallyl diphosphate contacts are provided by Ser232, Ser233, Asn234, and Ser277. Positions 232, 233, 234, and 277 each coordinate isopentenyl diphosphate.

Belongs to the IspH family. Requires [4Fe-4S] cluster as cofactor.

It catalyses the reaction isopentenyl diphosphate + 2 oxidized [2Fe-2S]-[ferredoxin] + H2O = (2E)-4-hydroxy-3-methylbut-2-enyl diphosphate + 2 reduced [2Fe-2S]-[ferredoxin] + 2 H(+). It carries out the reaction dimethylallyl diphosphate + 2 oxidized [2Fe-2S]-[ferredoxin] + H2O = (2E)-4-hydroxy-3-methylbut-2-enyl diphosphate + 2 reduced [2Fe-2S]-[ferredoxin] + 2 H(+). It participates in isoprenoid biosynthesis; dimethylallyl diphosphate biosynthesis; dimethylallyl diphosphate from (2E)-4-hydroxy-3-methylbutenyl diphosphate: step 1/1. Its pathway is isoprenoid biosynthesis; isopentenyl diphosphate biosynthesis via DXP pathway; isopentenyl diphosphate from 1-deoxy-D-xylulose 5-phosphate: step 6/6. Functionally, catalyzes the conversion of 1-hydroxy-2-methyl-2-(E)-butenyl 4-diphosphate (HMBPP) into a mixture of isopentenyl diphosphate (IPP) and dimethylallyl diphosphate (DMAPP). Acts in the terminal step of the DOXP/MEP pathway for isoprenoid precursor biosynthesis. This Bartonella tribocorum (strain CIP 105476 / IBS 506) protein is 4-hydroxy-3-methylbut-2-enyl diphosphate reductase.